The sequence spans 253 residues: Chemotaxis protein PomA (253 aa).

Helical transmembrane passes span 6-26, 28-48, 146-166, and 180-200; these read LLGL…GGSI, MFVD…VVLM, FGDV…VAML, and AVAL…FFPI. Residues 201–253 lie on the Cytoplasmic side of the membrane; it reads ADKLSLRRDQETLNRRLIMDGVLAIQDGQNPRVIDSYLKNYLNEGKRALEIDE.

It belongs to the MotA family. In terms of assembly, each stator complex is composed of 4 PomA and 2 PomB subunits. 2 A subunits and 1 B subunit are thought to form a single ion channel, so that each stator complex contains two channels.

The protein resides in the cell inner membrane. Its function is as follows. PomA and PomB comprise the stator element of the flagellar motor complex. Required for rotation of the flagellar motor. Probable transmembrane proton channel. The polypeptide is Chemotaxis protein PomA (pomA) (Vibrio alginolyticus).